The primary structure comprises 298 residues: Acetyl-coenzyme A carboxylase carboxyl transferase subunit beta 1 (298 aa).

A CoA carboxyltransferase N-terminal domain is found at 26-294 (MWVKCPSCGD…RAADVQNAPA (269 aa)). Zn(2+) contacts are provided by cysteine 30, cysteine 33, cysteine 49, and cysteine 51. Residues 30 to 51 (CPSCGDLIYTRQFSDNLKVCKC) form a C4-type zinc finger.

Belongs to the AccD/PCCB family. In terms of assembly, acetyl-CoA carboxylase is a heterohexamer composed of biotin carboxyl carrier protein (AccB), biotin carboxylase (AccC) and two subunits each of ACCase subunit alpha (AccA) and ACCase subunit beta (AccD). Requires Zn(2+) as cofactor.

It is found in the cytoplasm. It catalyses the reaction N(6)-carboxybiotinyl-L-lysyl-[protein] + acetyl-CoA = N(6)-biotinyl-L-lysyl-[protein] + malonyl-CoA. It participates in lipid metabolism; malonyl-CoA biosynthesis; malonyl-CoA from acetyl-CoA: step 1/1. Its function is as follows. Component of the acetyl coenzyme A carboxylase (ACC) complex. Biotin carboxylase (BC) catalyzes the carboxylation of biotin on its carrier protein (BCCP) and then the CO(2) group is transferred by the transcarboxylase to acetyl-CoA to form malonyl-CoA. The protein is Acetyl-coenzyme A carboxylase carboxyl transferase subunit beta 1 of Roseiflexus castenholzii (strain DSM 13941 / HLO8).